Consider the following 135-residue polypeptide: Holo-[acyl-carrier-protein] synthase (135 aa).

Residues D8 and E57 each contribute to the Mg(2+) site.

The protein belongs to the P-Pant transferase superfamily. AcpS family. The cofactor is Mg(2+).

The protein localises to the cytoplasm. It catalyses the reaction apo-[ACP] + CoA = holo-[ACP] + adenosine 3',5'-bisphosphate + H(+). Transfers the 4'-phosphopantetheine moiety from coenzyme A to a Ser of acyl-carrier-protein. This chain is Holo-[acyl-carrier-protein] synthase, found in Methylobacterium sp. (strain 4-46).